Consider the following 427-residue polypeptide: Glutamate-1-semialdehyde 2,1-aminomutase (427 aa).

Residue Lys265 is modified to N6-(pyridoxal phosphate)lysine.

It belongs to the class-III pyridoxal-phosphate-dependent aminotransferase family. HemL subfamily. Homodimer. Requires pyridoxal 5'-phosphate as cofactor.

The protein localises to the cytoplasm. The enzyme catalyses (S)-4-amino-5-oxopentanoate = 5-aminolevulinate. The protein operates within porphyrin-containing compound metabolism; protoporphyrin-IX biosynthesis; 5-aminolevulinate from L-glutamyl-tRNA(Glu): step 2/2. The chain is Glutamate-1-semialdehyde 2,1-aminomutase from Pseudomonas aeruginosa (strain LESB58).